We begin with the raw amino-acid sequence, 415 residues long: Histidine--tRNA ligase (415 aa).

This sequence belongs to the class-II aminoacyl-tRNA synthetase family. Homodimer.

Its subcellular location is the cytoplasm. The enzyme catalyses tRNA(His) + L-histidine + ATP = L-histidyl-tRNA(His) + AMP + diphosphate + H(+). The protein is Histidine--tRNA ligase of Clostridium botulinum (strain Kyoto / Type A2).